Reading from the N-terminus, the 386-residue chain is Succinyl-diaminopimelate desuccinylase (386 aa).

H73 lines the Zn(2+) pocket. The active site involves D75. A Zn(2+)-binding site is contributed by D106. The active-site Proton acceptor is E140. E141, E169, and H355 together coordinate Zn(2+).

The protein belongs to the peptidase M20A family. DapE subfamily. In terms of assembly, homodimer. It depends on Zn(2+) as a cofactor. Co(2+) serves as cofactor.

The enzyme catalyses N-succinyl-(2S,6S)-2,6-diaminopimelate + H2O = (2S,6S)-2,6-diaminopimelate + succinate. It participates in amino-acid biosynthesis; L-lysine biosynthesis via DAP pathway; LL-2,6-diaminopimelate from (S)-tetrahydrodipicolinate (succinylase route): step 3/3. Functionally, catalyzes the hydrolysis of N-succinyl-L,L-diaminopimelic acid (SDAP), forming succinate and LL-2,6-diaminopimelate (DAP), an intermediate involved in the bacterial biosynthesis of lysine and meso-diaminopimelic acid, an essential component of bacterial cell walls. This is Succinyl-diaminopimelate desuccinylase from Delftia acidovorans (strain DSM 14801 / SPH-1).